The chain runs to 122 residues: Ribonuclease P protein component (122 aa).

Belongs to the RnpA family. In terms of assembly, consists of a catalytic RNA component (M1 or rnpB) and a protein subunit.

The enzyme catalyses Endonucleolytic cleavage of RNA, removing 5'-extranucleotides from tRNA precursor.. RNaseP catalyzes the removal of the 5'-leader sequence from pre-tRNA to produce the mature 5'-terminus. It can also cleave other RNA substrates such as 4.5S RNA. The protein component plays an auxiliary but essential role in vivo by binding to the 5'-leader sequence and broadening the substrate specificity of the ribozyme. The sequence is that of Ribonuclease P protein component from Roseiflexus sp. (strain RS-1).